Here is a 534-residue protein sequence, read N- to C-terminus: Glucans biosynthesis protein D (534 aa).

Positions 1–26 form a signal peptide, tat-type signal; it reads MQRRDFIRNASLALAAFGLPSLPACA.

Belongs to the OpgD/OpgG family. Post-translationally, predicted to be exported by the Tat system. The position of the signal peptide cleavage has not been experimentally proven.

The protein resides in the periplasm. It functions in the pathway glycan metabolism; osmoregulated periplasmic glucan (OPG) biosynthesis. In terms of biological role, probably involved in the control of the structural glucose backbone of osmoregulated periplasmic glucans (OPGs). The protein is Glucans biosynthesis protein D of Stenotrophomonas maltophilia (strain R551-3).